The chain runs to 69 residues: U2-agatoxin-Ao1z (69 aa).

The first 20 residues, 1–20 (MRAIISLLLISAMVFSMIEA), serve as a signal peptide directing secretion. A propeptide spanning residues 21-34 (VPVEEGLQLFEGER) is cleaved from the precursor. Intrachain disulfides connect Cys-37–Cys-53, Cys-44–Cys-58, and Cys-52–Cys-68.

The protein belongs to the neurotoxin 01 (U2-agtx) family. Expressed by the venom gland.

Its subcellular location is the secreted. Its function is as follows. Insect active toxin causing rapid but reversible paralysis in crickets. No activity shown in mammals. Does not show effect on mammalian voltage-gated calcium channels. In Agelena orientalis (Funnel-web spider), this protein is U2-agatoxin-Ao1z.